The following is a 189-amino-acid chain: dCTP deaminase (189 aa).

DCTP contacts are provided by residues 112–117 (KSTYAR), 136–138 (TLE), Q157, Y171, and Q181. E138 (proton donor/acceptor) is an active-site residue.

The protein belongs to the dCTP deaminase family. In terms of assembly, homotrimer.

It catalyses the reaction dCTP + H2O + H(+) = dUTP + NH4(+). It participates in pyrimidine metabolism; dUMP biosynthesis; dUMP from dCTP (dUTP route): step 1/2. Functionally, catalyzes the deamination of dCTP to dUTP. This Acinetobacter baumannii (strain SDF) protein is dCTP deaminase.